A 785-amino-acid chain; its full sequence is MTAAHTRILELRAELDQHNYRYHVLDEPSIPDAEYDRLFHELKALEAEHPDLVTRDSPTQRVGSAALSAFTQVKHDIPMLSLGNAFDETTMLEFDRRVTEGLDLPVGDLFGGGAAVEYSCEPKLDGLAVSLLYQDGELVRGATRGDGTTGEDISVNIRTVRNIPLKLHGSGWPATLEVRGEVFMSKAGFERLNASQLEVGGKTFANPRNAAAGSLRQLDSKITASRPLEFCCYGVTTDISDTHIGNLQQLKKWGMPISHELKLAKGIQDCLDYYRDIGERRNSLPYEIDGVVFKVNSIASQRELGFRAREPRWAIAHKFPAMEELTELLDVEFQVGRTGAVTPVARLKPVKVAGVTVSNATLHNMDEVARLGLMIGDTVIIRRAGDVIPQVVSVVPERRPENARAVQIPESCPVCGSHVERTQLVKRSKGKETVSEGAVYRCVGRLACGAQLKQAIIHFVSRRAMDIDGLGDKTIEQLVDEKLIGSPADLYTLKYEQIIDLEGFADISSKKLITAIENSKTPTLARFIYALGIPDVGEETAKVLARSLASLERVQKALPEVLTYLPDVGLEVAHEIHSFFEDSHNQDVIGALLSPQACGLQLQDQGELSAEFAASTTLGGLLDKLHVPSVGPGAAQKLADKFVTLEGVIKADWLDMRQALPEKQAKAVREFFDNADNANHALAIEQQLKDFGMHWDSEKKVVEGLPEAGHTWVLTGSLELMSRDVAKDKLESLGAKVAGSVSAKTHCVVAGPGAGSKLAKASELGLKVLDEEAFVAFLAKHNIPV.

NAD(+)-binding positions include Asp32 to Asp36, Ser81 to Leu82, and Glu121. Lys123 (N6-AMP-lysine intermediate) is an active-site residue. Residues Arg144, Glu181, Lys294, and Lys318 each contribute to the NAD(+) site. Residues Cys412, Cys415, Cys442, and Cys448 each coordinate Zn(2+). Residues Val702–Val785 form the BRCT domain.

The protein belongs to the NAD-dependent DNA ligase family. LigA subfamily. The cofactor is Mg(2+). Mn(2+) serves as cofactor.

It catalyses the reaction NAD(+) + (deoxyribonucleotide)n-3'-hydroxyl + 5'-phospho-(deoxyribonucleotide)m = (deoxyribonucleotide)n+m + AMP + beta-nicotinamide D-nucleotide.. In terms of biological role, DNA ligase that catalyzes the formation of phosphodiester linkages between 5'-phosphoryl and 3'-hydroxyl groups in double-stranded DNA using NAD as a coenzyme and as the energy source for the reaction. It is essential for DNA replication and repair of damaged DNA. This chain is DNA ligase, found in Pseudomonas fluorescens (strain SBW25).